A 550-amino-acid chain; its full sequence is MSSRDKQDSRKKEFKKSLDSETARRKREENSIGIRKNAREELMLKRRGIVQPNPSTSYQIIVPPEVQEQFQKYENETMENKIKNLPGLVTALNSNDQAYVYSSLVQFRKLLSIHAYPPIDQVIECGIIPKLNQLLQCNNPKVQFESAWALTNIASGNNRQTQTVMESGSVPIFIQLLCAETTDEVKEQCAWALGNIAGDTVDSRNYLLKYGAMNALIPLLHYGEDNGATTTSANSERKIGLIQNVVWTISNLCRGKPQPDFSVVSQCLPAINELIRIENLPSEIYGDLCWALSYLCDGPNTKIQAVIDSGVVPRLVKLLEYPDSIVFTPALRAVGNIVTGESSQTQIVIDNNGVELITRLLAVQKKSIRKESCWALSNITAGEPSQIDVVVSNPKTVTTLISLLSHSEHDIKREACWALSNSTNNSSTKSIQTLVRHNILKHFIDLLNSQDLVILKIVLEGLINIIKEGEKTKTKTGVNPYVNLISEMQGESIIYDLQEHQSKDVYKKAFELIEFFESSDYSDSENSEPNINQNGQYEFSSNYNSNSINI.

Residues 1–30 (MSSRDKQDSRKKEFKKSLDSETARRKREEN) show a composition bias toward basic and acidic residues. Residues 1 to 34 (MSSRDKQDSRKKEFKKSLDSETARRKREENSIGI) form a disordered region. One can recognise an IBB domain in the interval 1–56 (MSSRDKQDSRKKEFKKSLDSETARRKREENSIGIRKNAREELMLKRRGIVQPNPST). 8 ARM repeats span residues 116–155 (YPPI…NIAS), 158–198 (NRQT…NIAG), 201–241 (VDSR…KIGL), 256–297 (KPQP…YLCD), 300–339 (NTKI…NIVT), 342–381 (SSQT…NITA), 385–424 (SQID…NSTN), and 428–467 (TKSI…NIIK).

It belongs to the importin alpha family. Forms a complex with tnpo/importin subunit beta.

The protein resides in the cytoplasm. It localises to the nucleus envelope. Functionally, functions in nuclear protein import via a substrate-importin alpha-beta transport complex that passes though the nuclear pore complexes (NPC). Binds specifically and directly to substrates containing either a simple or bipartite NLS motif. The polypeptide is Probable importin subunit alpha-A (Dictyostelium discoideum (Social amoeba)).